The following is a 377-amino-acid chain: Subtilisin-like protease CPC735_012930 (377 aa).

The signal sequence occupies residues 1–20; that stretch reads MSILFKIFASTLAVVSVVNA. A propeptide spanning residues 21 to 118 is cleaved from the precursor; sequence GELLNFENER…VEPDRMASAT (98 aa). An Inhibitor I9 domain is found at 36–114; sequence SYIVVMKDGT…HVKYVEPDRM (79 aa). Positions 128-377 constitute a Peptidase S8 domain; the sequence is SWGLGRISHT…NKLLYNKSGF (250 aa). Active-site charge relay system residues include Asp160 and His191. Residue Asn252 is glycosylated (N-linked (GlcNAc...) asparagine). Ser323 (charge relay system) is an active-site residue. Residues Asn364 and Asn373 are each glycosylated (N-linked (GlcNAc...) asparagine).

The protein belongs to the peptidase S8 family.

Its subcellular location is the secreted. Functionally, secreted subtilisin-like serine protease with keratinolytic activity that contributes to pathogenicity. This chain is Subtilisin-like protease CPC735_012930, found in Coccidioides posadasii (strain C735) (Valley fever fungus).